Consider the following 478-residue polypeptide: Sodium-dependent phosphate transport protein 3 (478 aa).

4 N-linked (GlcNAc...) asparagine glycosylation sites follow: Asn28, Asn47, Asn56, and Asn69. A run of 10 helical transmembrane segments spans residues 98–118, 130–150, 183–203, 211–231, 273–293, 317–337, 341–361, 363–383, 405–425, and 442–462; these read ISYG…IFGA, SLLT…VIVI, SIAG…GGLI, FIFY…FTVI, LPLW…TIII, LPFI…DFLL, LLSL…LPSL, AVAL…LILI, YASF…IISS, and NVFF…LIFG.

This sequence belongs to the major facilitator superfamily. Sodium/anion cotransporter family. As to expression, expressed in the liver, kidney, placenta, lung and thyroid (at protein level).

Its subcellular location is the apical cell membrane. It carries out the reaction 3 Na(+)(out) + phosphate(out) = 3 Na(+)(in) + phosphate(in). The enzyme catalyses urate(out) + n chloride(in) = urate(in) + n chloride(out). Acts as a membrane potential-dependent organic anion transporter, the transport requires a low concentration of chloride ions. Mediates chloride-dependent transport of urate. Can actively transport inorganic phosphate into cells via Na(+) cotransport. This is Sodium-dependent phosphate transport protein 3 (Slc17a2) from Mus musculus (Mouse).